Here is a 355-residue protein sequence, read N- to C-terminus: Poly(3-hydroxyalkanoate) polymerase subunit PhaC (355 aa).

Residues proline 69–isoleucine 334 enclose the AB hydrolase-1 domain. Cysteine 149 is an active-site residue.

The protein belongs to the PHA/PHB synthase family. Type III PhaC subfamily. As to quaternary structure, a large complex of PhaC and PhaE; the ratio of the subunits has been estimated to be from 1:1 to 4:1, with more PhaE than PhaC.

Its subcellular location is the cytoplasm. It carries out the reaction (3R)-3-hydroxybutanoyl-CoA + [(3R)-hydroxybutanoate](n) = [(3R)-hydroxybutanoate](n+1) + CoA. It functions in the pathway biopolymer metabolism; poly-(R)-3-hydroxybutanoate biosynthesis. Functionally, polymerizes D(-)-3-hydroxybutyryl-CoA to create polyhydroxybutyrate (PHB) which consists of thousands of hydroxybutyrate molecules linked end to end. This subunit has catalytic activity that is enhanced 100-fold by PhaE, the non-catalytic subunit. In Allochromatium vinosum (strain ATCC 17899 / DSM 180 / NBRC 103801 / NCIMB 10441 / D) (Chromatium vinosum), this protein is Poly(3-hydroxyalkanoate) polymerase subunit PhaC.